Consider the following 442-residue polypeptide: Putative nucleotide-sugar transporter YMD8 (442 aa).

Topologically, residues 1-3 (MNR) are cytoplasmic. Residues 4–24 (TVFLAFVFGWYFCSIALSIYN) traverse the membrane as a helical segment. The Extracellular portion of the chain corresponds to 25–32 (RWMFDPKD). A helical membrane pass occupies residues 33–53 (GLGIGYPVLVTTFHQATLWLL). Topologically, residues 54-76 (SGIYIKLRHKPVKNVLRKNNGFN) are cytoplasmic. The helical transmembrane segment at 77 to 97 (WSFFLKFLLPTAVASAGDIGL) threads the bilayer. Residues 98 to 107 (SNVSFQYVPL) are Extracellular-facing. N-linked (GlcNAc...) asparagine glycosylation is present at Asn-99. Residues 108–128 (TIYTIIKSSSIAFVLLFGCIF) form a helical membrane-spanning segment. Topologically, residues 129–132 (KLEK) are cytoplasmic. Residues 133–153 (FHWKLALSVIIMFVGVALMVF) traverse the membrane as a helical segment. The Extracellular segment spans residues 154–166 (KPSDSTSTKNDQA). The chain crosses the membrane as a helical span at residues 167–187 (LVIFGSFLVLASSCLSGLRWV). The Cytoplasmic portion of the chain corresponds to 188–254 (YTQLMLRNNP…PIHTIHQLAP (67 aa)). Ser-209 carries the phosphoserine modification. A helical transmembrane segment spans residues 255 to 275 (IMGITLLLTSLLVEKPFPGIF). Topologically, residues 276-301 (SSSIFRLDTSNGGVGTETTVLSIVRG) are extracellular. The helical transmembrane segment at 302–322 (IVLLILPGFAVFLLTICEFSI) threads the bilayer. Residues 323 to 329 (LEQTPVL) are Cytoplasmic-facing. The chain crosses the membrane as a helical span at residues 330–350 (TVSIVGIVKELLTVIFGIIIL). Topologically, residues 351-355 (SERLS) are extracellular. The helical transmembrane segment at 356–376 (GFYNWLGMLIIMADVCYYNYF) threads the bilayer. At 377–442 (RYKQDLLQKY…QNVSRSSQQV (66 aa)) the chain is on the cytoplasmic side.

This sequence belongs to the TPT transporter family. SLC35C subfamily.

Its subcellular location is the golgi apparatus membrane. It is found in the cytoplasmic vesicle. It localises to the COPI-coated vesicle membrane. The sequence is that of Putative nucleotide-sugar transporter YMD8 (YMD8) from Saccharomyces cerevisiae (strain ATCC 204508 / S288c) (Baker's yeast).